A 428-amino-acid chain; its full sequence is Cytochrome c biogenesis protein CcsB (428 aa).

Helical transmembrane passes span leucine 14 to isoleucine 34, serine 72 to arginine 92, and isoleucine 162 to serine 182.

This sequence belongs to the Ccs1/CcsB family. As to quaternary structure, may interact with CcsA.

It is found in the cellular thylakoid membrane. Required during biogenesis of c-type cytochromes (cytochrome c6 and cytochrome f) at the step of heme attachment. This chain is Cytochrome c biogenesis protein CcsB, found in Prochlorococcus marinus (strain MIT 9301).